The primary structure comprises 89 residues: Small ribosomal subunit protein uS15 (89 aa).

The protein belongs to the universal ribosomal protein uS15 family. Part of the 30S ribosomal subunit. Forms a bridge to the 50S subunit in the 70S ribosome, contacting the 23S rRNA.

Its function is as follows. One of the primary rRNA binding proteins, it binds directly to 16S rRNA where it helps nucleate assembly of the platform of the 30S subunit by binding and bridging several RNA helices of the 16S rRNA. Forms an intersubunit bridge (bridge B4) with the 23S rRNA of the 50S subunit in the ribosome. The sequence is that of Small ribosomal subunit protein uS15 from Chloroherpeton thalassium (strain ATCC 35110 / GB-78).